Here is a 158-residue protein sequence, read N- to C-terminus: Regulator of sigma D (158 aa).

This sequence belongs to the Rsd/AlgQ family. As to quaternary structure, interacts with RpoD.

Its subcellular location is the cytoplasm. Binds RpoD and negatively regulates RpoD-mediated transcription activation by preventing the interaction between the primary sigma factor RpoD with the catalytic core of the RNA polymerase and with promoter DNA. May be involved in replacement of the RNA polymerase sigma subunit from RpoD to RpoS during the transition from exponential growth to the stationary phase. The chain is Regulator of sigma D from Escherichia coli O6:H1 (strain CFT073 / ATCC 700928 / UPEC).